We begin with the raw amino-acid sequence, 138 residues long: Basic phospholipase A2 ammodytoxin A (138 aa).

An N-terminal signal peptide occupies residues 1–16 (MRTLWIVAVCLIGVEG). 7 disulfide bridges follow: Cys-42–Cys-131, Cys-44–Cys-60, Cys-59–Cys-111, Cys-65–Cys-138, Cys-66–Cys-104, Cys-73–Cys-97, and Cys-91–Cys-102. 3 residues coordinate Ca(2+): Tyr-43, Gly-45, and Gly-47. His-63 is an active-site residue. Asp-64 lines the Ca(2+) pocket. The active site involves Asp-105.

The protein belongs to the phospholipase A2 family. Group II subfamily. D49 sub-subfamily. In terms of assembly, monomer. Binds to calmodulin, coagulation factor X (F10), M-type PLA2 receptor (R-180). May also bind to 14-3-3 proteins gamma (YWHAG) and epsilon (YWHAE), and R25, a mitochondrial membrane protein. The cofactor is Ca(2+). As to expression, expressed by the venom gland.

The protein localises to the secreted. Its subcellular location is the host cytoplasm. It is found in the host cytosol. It catalyses the reaction a 1,2-diacyl-sn-glycero-3-phosphocholine + H2O = a 1-acyl-sn-glycero-3-phosphocholine + a fatty acid + H(+). Functionally, snake venom phospholipase A2 (PLA2) that acts as a presynaptic neurotoxin, an inhibitor of blood coagulation, and has been found to bind with high affinity to intracellular proteins. The response of indirectly stimulated neuromuscular preparations to ammodytoxin (Atx) is triphasic. The first phase, the transient inhibition of the acetylcholine (ACh) release, starts soon after the addition of Atx and lasts for several minutes. This phase is probably independent of Atx enzymatic activity. The effect may be due to the specific binding of the toxin to presynaptic receptors. These receptors, called N-type receptors, are still unidentified. It is noteworthy that a neuronal isoform of the M-type PLA2 receptor (R180) has been identified as a high-affinity receptor for Atx in neuronal plasma membranes. It was demonstrated however that this receptor is not essential for expression of neurotoxicity by Atx. The second phase corresponds to an augmentation of neurotransmitter release. A peak is reached 10-20 minutes after exposure of the preparation to Atx and is followed by a gradual reduction. In this phase, the enzymatic activity of Atx of the mammalian is not significant. It is speculated that the increased release of neurotransmitter in this phase is induced by the interference of Atx with voltage-gated potassium channels. Measurements of ionic currents showed however that voltage-gated potassium channels are not affected by Atx. The third phase of the response of neuromuscular preparations to Atx, which corresponds to a complete and irreversible paralysis, is clearly dependent on the hydrolytic activity of the toxin. In addition to its presynaptic neurotoxicity, Atx shows an anticoagulant activity by binding with high affinity to activated coagulation factor X (F10) thus inhibiting the formation of the prothrombinase complex (FX/FV) and its activity (IC(50) is 20 nM). Surprisingly, Atx was discovered to bind intracellular proteins such as calmodulin (CaM) (IC(50) is 6 nM), 14-3-3 proteins gamma (YWHAG) and epsilon (YWHAE) (by similarity with AtxC), as well as R25 (by similarity with AtxC), a mitochondrial integral membrane protein found in cerebral cortex. These findings raised a doubt about the dogma of the exclusively extracellular action of PLA2s, defended by the potential instability of these molecules in the reducing environment of the eukaryotic cytosol coupled with their possible inability to act as enzymes in this cellular compartment, due to too low concentration of calcium ions. This hypothesis was challenged efficiently by demonstrating the internalization of AtxA into a culture cells, but still remains to be directly demonstrated in vivo. PLA2 catalyzes the calcium-dependent hydrolysis of the 2-acyl groups in 3-sn-phosphoglycerides. This chain is Basic phospholipase A2 ammodytoxin A, found in Vipera ammodytes ammodytes (Western sand viper).